The chain runs to 480 residues: Bindin (480 aa).

Residues 1–20 (MDSQVLPLILLIIVFAASSA) form the signal peptide. The propeptide occupies 21–247 (HGHFPHRTNQ…GEMRAERQRR (227 aa)). Residues 161–211 (AEMRHRRSAKDDDVNKRASPRKGSSPAGKKVQIMEQDAGKGDAHNEKEVVK) are disordered. Residues 197 to 211 (DAGKGDAHNEKEVVK) are compositionally biased toward basic and acidic residues. A fucose-binding domain region spans residues 377-385 (LRHLRHHSN). Residues 431–451 (GAGAVAGAAMAAGMPPYPGGA) traverse the membrane as a helical segment. The tract at residues 452–480 (QGGMRVGGQPQNPMGGNAYNPMTGYRQQG) is disordered.

This sequence belongs to the bindin family.

It is found in the cytoplasmic vesicle. The protein resides in the secretory vesicle. It localises to the acrosome membrane. Species-specific sea urchin sperm protein required for adhesion of sperm to the egg surface during fertilization. Bindin coats the acrosomal process after it is externalized by the acrosome reaction. It binds to sulfated, fucose-containing polysaccharides on the vitelline layer receptor proteoglycans which cover the egg plasma membrane. The protein is Bindin of Arbacia punctulata (Punctuate sea urchin).